A 329-amino-acid polypeptide reads, in one-letter code: o-succinylbenzoate synthase (329 aa).

Catalysis depends on Lys-140, which acts as the Proton donor. Mg(2+)-binding residues include Asp-168, Glu-197, and Asp-220. Residue Lys-242 is the Proton acceptor of the active site.

Belongs to the mandelate racemase/muconate lactonizing enzyme family. MenC type 1 subfamily. A divalent metal cation serves as cofactor.

The enzyme catalyses (1R,6R)-6-hydroxy-2-succinyl-cyclohexa-2,4-diene-1-carboxylate = 2-succinylbenzoate + H2O. It participates in quinol/quinone metabolism; 1,4-dihydroxy-2-naphthoate biosynthesis; 1,4-dihydroxy-2-naphthoate from chorismate: step 4/7. Its pathway is quinol/quinone metabolism; menaquinone biosynthesis. In terms of biological role, converts 2-succinyl-6-hydroxy-2,4-cyclohexadiene-1-carboxylate (SHCHC) to 2-succinylbenzoate (OSB). The polypeptide is o-succinylbenzoate synthase (Haemophilus influenzae (strain ATCC 51907 / DSM 11121 / KW20 / Rd)).